The primary structure comprises 139 residues: Ribonuclease P protein component (139 aa).

Belongs to the RnpA family. As to quaternary structure, consists of a catalytic RNA component (M1 or rnpB) and a protein subunit.

It carries out the reaction Endonucleolytic cleavage of RNA, removing 5'-extranucleotides from tRNA precursor.. Functionally, RNaseP catalyzes the removal of the 5'-leader sequence from pre-tRNA to produce the mature 5'-terminus. It can also cleave other RNA substrates such as 4.5S RNA. The protein component plays an auxiliary but essential role in vivo by binding to the 5'-leader sequence and broadening the substrate specificity of the ribozyme. The sequence is that of Ribonuclease P protein component from Paraburkholderia xenovorans (strain LB400).